The sequence spans 1791 residues: Protein TIC 214 (1791 aa).

The next 6 helical transmembrane spans lie at 19–39 (IINS…FSIG), 68–88 (FIAG…HLAL), 91–111 (PHTI…WNNH), 133–153 (VFLN…SSML), 176–196 (VGWL…LVWI), and 227–247 (IFSI…PSPI). Positions 1492–1511 (ASQVELESDKENKKNPESAL) are disordered. Positions 1498 to 1511 (ESDKENKKNPESAL) are enriched in basic and acidic residues.

The protein belongs to the TIC214 family. Part of the Tic complex.

Its subcellular location is the plastid. It localises to the chloroplast inner membrane. In terms of biological role, involved in protein precursor import into chloroplasts. May be part of an intermediate translocation complex acting as a protein-conducting channel at the inner envelope. The chain is Protein TIC 214 from Barbarea verna (Land cress).